A 405-amino-acid chain; its full sequence is BRCA1-A complex subunit Abraxas 1 (405 aa).

Positions 7 to 154 constitute an MPN domain; that stretch reads LGVLSGFVLG…CTHCLEHGLY (148 aa). The residue at position 48 (Ser-48) is a Phosphoserine. Residues 208-262 adopt a coiled-coil conformation; sequence SLKEVRKINEMYAAIQEELKTICQKVEQSEREVEKLLMDVNRLKEVRKKQQAQAK. The interval 333–405 is disordered; the sequence is ASPAPAAPLS…DTDYPRSPTF (73 aa). A phosphoserine mark is found at Ser-382, Ser-383, Ser-392, and Ser-402. Over residues 386–397 the composition is skewed to acidic residues; sequence IDTEVGSPEDDT. A pSXXF motif motif is present at residues 402–405; the sequence is SPTF.

The protein belongs to the FAM175 family. Abraxas subfamily. Component of the ARISC complex, at least composed of UIMC1/RAP80, ABRAXAS1, BRCC3/BRCC36, BABAM2 and BABAM1/NBA1. Component of the BRCA1-A complex, at least composed of the BRCA1, BARD1, UIMC1/RAP80, ABRAXAS1, BRCC3/BRCC36, BABAM2 and BABAM1/NBA1. In the complex, interacts directly with UIMC1/RAP80, BRCC3/BRCC36 and BABAM2. Homodimer. Interacts directly (when phosphorylated at Ser-402) with BRCA1. The phosphorylated homodimer can interact directly with two BRCA1 chains, giving rise to a heterotetramer. Binds polyubiquitin. In terms of processing, phosphorylation of Ser-402 of the pSXXF motif by ATM or ATR constitutes a specific recognition motif for the BRCT domain of BRCA1.

The protein localises to the nucleus. Functionally, involved in DNA damage response and double-strand break (DSB) repair. Component of the BRCA1-A complex, acting as a central scaffold protein that assembles the various components of the complex and mediates the recruitment of BRCA1. The BRCA1-A complex specifically recognizes 'Lys-63'-linked ubiquitinated histones H2A and H2AX at DNA lesion sites, leading to target the BRCA1-BARD1 heterodimer to sites of DNA damage at DSBs. This complex also possesses deubiquitinase activity that specifically removes 'Lys-63'-linked ubiquitin on histones H2A and H2AX. The polypeptide is BRCA1-A complex subunit Abraxas 1 (Rattus norvegicus (Rat)).